We begin with the raw amino-acid sequence, 170 residues long: Lipoprotein signal peptidase (170 aa).

4 helical membrane-spanning segments follow: residues 11–31 (LGWL…KAHF), 41–61 (IVVI…AAFS), 69–89 (WQRW…VVWL), and 95–115 (DDTW…GNLY). Catalysis depends on residues Asp-125 and Asp-144. A helical membrane pass occupies residues 136-156 (YFPAFNFADSAITVGAIMLAL).

It belongs to the peptidase A8 family.

It is found in the cell inner membrane. The catalysed reaction is Release of signal peptides from bacterial membrane prolipoproteins. Hydrolyzes -Xaa-Yaa-Zaa-|-(S,diacylglyceryl)Cys-, in which Xaa is hydrophobic (preferably Leu), and Yaa (Ala or Ser) and Zaa (Gly or Ala) have small, neutral side chains.. The protein operates within protein modification; lipoprotein biosynthesis (signal peptide cleavage). Functionally, this protein specifically catalyzes the removal of signal peptides from prolipoproteins. The polypeptide is Lipoprotein signal peptidase (Pseudomonas fluorescens).